The following is an 860-amino-acid chain: Nuclear cap-binding protein complex subunit 1 (860 aa).

Positions 36 to 271 constitute an MIF4G domain; the sequence is CKDMLPDIRT…SNVKNALAND (236 aa).

This sequence belongs to the NCBP1 family. As to quaternary structure, component of the nuclear cap-binding complex (CBC).

It is found in the nucleus. Functionally, component of the cap-binding complex (CBC) involved in the nuclear export of capped U snRNAs. The CBC complex is required for efficient pre-mRNA splicing through efficient commitment complex and spliceosome formation; and involved in rRNA processing at sites A0, A1 and A2. This chain is Nuclear cap-binding protein complex subunit 1 (CBC1), found in Eremothecium gossypii (strain ATCC 10895 / CBS 109.51 / FGSC 9923 / NRRL Y-1056) (Yeast).